Reading from the N-terminus, the 96-residue chain is Large ribosomal subunit protein uL4 (96 aa).

The tract at residues 77-96 (RAPNKKVKRRELKKNPLKNL) is disordered. Positions 79-96 (PNKKVKRRELKKNPLKNL) are enriched in basic residues.

This sequence belongs to the universal ribosomal protein uL4 family. Component of the large ribosomal subunit.

Its subcellular location is the cytoplasm. Its function is as follows. Component of the large ribosomal subunit. The ribosome is a large ribonucleoprotein complex responsible for the synthesis of proteins in the cell. The protein is Large ribosomal subunit protein uL4 (rpl4) of Xenopus tropicalis (Western clawed frog).